Consider the following 390-residue polypeptide: tRNA(Met) cytidine acetate ligase (390 aa).

ATP is bound by residues 7–20, Gly-101, Asn-162, and Arg-187; that span reads VVEY…HKLH.

The protein belongs to the TmcAL family.

It is found in the cytoplasm. The enzyme catalyses cytidine(34) in elongator tRNA(Met) + acetate + ATP = N(4)-acetylcytidine(34) in elongator tRNA(Met) + AMP + diphosphate. Its function is as follows. Catalyzes the formation of N(4)-acetylcytidine (ac(4)C) at the wobble position of elongator tRNA(Met), using acetate and ATP as substrates. First activates an acetate ion to form acetyladenylate (Ac-AMP) and then transfers the acetyl group to tRNA to form ac(4)C34. This is tRNA(Met) cytidine acetate ligase from Listeria monocytogenes serotype 4b (strain F2365).